The primary structure comprises 150 residues: 1,4-dihydroxy-2-naphthoyl-CoA hydrolase (150 aa).

D19 is an active-site residue.

It belongs to the 4-hydroxybenzoyl-CoA thioesterase family. DHNA-CoA hydrolase subfamily.

The enzyme catalyses 1,4-dihydroxy-2-naphthoyl-CoA + H2O = 1,4-dihydroxy-2-naphthoate + CoA + H(+). It functions in the pathway cofactor biosynthesis; phylloquinone biosynthesis. Its pathway is quinol/quinone metabolism; 1,4-dihydroxy-2-naphthoate biosynthesis; 1,4-dihydroxy-2-naphthoate from chorismate: step 7/7. Its function is as follows. Catalyzes the hydrolysis of 1,4-dihydroxy-2-naphthoyl-CoA (DHNA-CoA) to 1,4-dihydroxy-2-naphthoate (DHNA), a reaction involved in phylloquinone (vitamin K1) biosynthesis. The polypeptide is 1,4-dihydroxy-2-naphthoyl-CoA hydrolase (Prochlorococcus marinus (strain MIT 9215)).